Consider the following 411-residue polypeptide: Probable tRNA pseudouridine synthase D (411 aa).

Residue Asp-79 is the Nucleophile of the active site. One can recognise a TRUD domain in the interval 150 to 369; that stretch reads GFPNYFGQQR…STGDRRIVSA (220 aa).

Belongs to the pseudouridine synthase TruD family.

It catalyses the reaction uridine(13) in tRNA = pseudouridine(13) in tRNA. Could be responsible for synthesis of pseudouridine from uracil-13 in transfer RNAs. This is Probable tRNA pseudouridine synthase D from Thermoplasma acidophilum (strain ATCC 25905 / DSM 1728 / JCM 9062 / NBRC 15155 / AMRC-C165).